A 346-amino-acid polypeptide reads, in one-letter code: Inner membrane protein YnjI (346 aa).

Residues 1–38 are Periplasmic-facing; the sequence is MKKVLLQNHPGSEKYSFNGWEIFNSNFERMIKENKAML. A helical transmembrane segment spans residues 39–59; sequence LCKWGFYLTCVVAVMFVFAAI. Over 60-68 the chain is Cytoplasmic; it reads TSNGLNERG. The helical transmembrane segment at 69–89 threads the bilayer; that stretch reads LITAGCSFLYLLIMMGLIVRA. The Periplasmic segment spans residues 90-234; the sequence is GFKAKKEQLH…DCANHSSGKS (145 aa). The chain crosses the membrane as a helical span at residues 235–255; the sequence is SAKLIWAAELSWMISISSTAF. Residues 256-346 lie on the Cytoplasmic side of the membrane; that stretch reads QNGTIEEELA…PWGASSVKYS (91 aa).

The protein resides in the cell inner membrane. The chain is Inner membrane protein YnjI (ynjI) from Escherichia coli (strain K12).